A 644-amino-acid chain; its full sequence is Coiled-coil domain-containing protein 22 homolog (644 aa).

Positions 316 to 341 (DEQKAAAMAGLSESGPPKMDTEEELQ) are disordered. Coiled coils occupy residues 333–383 (KMDT…NEQV), 409–486 (DAEN…GKDD), and 592–644 (GVIM…LKSS).

Belongs to the CCDC22 family.

The polypeptide is Coiled-coil domain-containing protein 22 homolog (Nematostella vectensis (Starlet sea anemone)).